The primary structure comprises 515 residues: Maturase K (515 aa).

It belongs to the intron maturase 2 family. MatK subfamily.

Its subcellular location is the plastid. The protein resides in the chloroplast. Its function is as follows. Usually encoded in the trnK tRNA gene intron. Probably assists in splicing its own and other chloroplast group II introns. The protein is Maturase K of Picea engelmannii (Engelmann's spruce).